A 359-amino-acid chain; its full sequence is 3-dehydroquinate synthase (359 aa).

NAD(+)-binding positions include 71–76 (DGEAYK), 105–109 (GVIGD), 129–130 (TT), Lys-142, and Lys-151. Glu-184, His-247, and His-264 together coordinate Zn(2+).

This sequence belongs to the sugar phosphate cyclases superfamily. Dehydroquinate synthase family. Requires Co(2+) as cofactor. It depends on Zn(2+) as a cofactor. NAD(+) serves as cofactor.

The protein localises to the cytoplasm. The enzyme catalyses 7-phospho-2-dehydro-3-deoxy-D-arabino-heptonate = 3-dehydroquinate + phosphate. Its pathway is metabolic intermediate biosynthesis; chorismate biosynthesis; chorismate from D-erythrose 4-phosphate and phosphoenolpyruvate: step 2/7. Its function is as follows. Catalyzes the conversion of 3-deoxy-D-arabino-heptulosonate 7-phosphate (DAHP) to dehydroquinate (DHQ). In Burkholderia ambifaria (strain ATCC BAA-244 / DSM 16087 / CCUG 44356 / LMG 19182 / AMMD) (Burkholderia cepacia (strain AMMD)), this protein is 3-dehydroquinate synthase.